Reading from the N-terminus, the 432-residue chain is Asparagine--tRNA ligase (432 aa).

Belongs to the class-II aminoacyl-tRNA synthetase family. In terms of assembly, homodimer.

It localises to the cytoplasm. It catalyses the reaction tRNA(Asn) + L-asparagine + ATP = L-asparaginyl-tRNA(Asn) + AMP + diphosphate + H(+). In Lacticaseibacillus paracasei (strain ATCC 334 / BCRC 17002 / CCUG 31169 / CIP 107868 / KCTC 3260 / NRRL B-441) (Lactobacillus paracasei), this protein is Asparagine--tRNA ligase.